The chain runs to 760 residues: MKTWVKIVFGVATSAVLALLVMCIVLRPSRVHNSEENTMRALTLKDILNGTFSYKTFFPNWISGQEYLHQSADNNIVLYNIETGQSYTILSNRTMKSVNASNYGLSPDRQFVYLESDYSKLWRYSYTATYYIYDLSNGEFVRGNELPRPIQYLCWSPVGSKLAYVYQNNIYLKQRPGDPPFQITFNGRENKIFNGIPDWVYEEEMLATKYALWWSPNGKFLAYAEFNDTDIPVIAYSYYGDEQYPRTINIPYPKAGAKNPVVRIFIIDTTYPAYVGPQEVPVPAMIASSDYYFSWLTWVTDERVCLQWLKRVQNVSVLSICDFREDWQTWDCPKTQEHIEESRTGWAGGFFVSTPVFSYDAISYYKIFSDKDGYKHIHYIKDTVENAIQITSGKWEAINIFRVTQDSLFYSSNEFEEYPGRRNIYRISIGSYPPSKKCVTCHLRKERCQYYTASFSDYAKYYALVCYGPGIPISTLHDGRTDQEIKILEENKELENALKNIQLPKEEIKKLEVDEITLWYKMILPPQFDRSKKYPLLIQVYGGPCSQSVRSVFAVNWISYLASKEGMVIALVDGRGTAFQGDKLLYAVYRKLGVYEVEDQITAVRKFIEMGFIDEKRIAIWGWSYGGYVSSLALASGTGLFKCGIAVAPVSSWEYYASVYTERFMGLPTKDDNLEHYKNSTVMARAEYFRNVDYLLIHGTADDNVHFQNSAQIAKALVNAQVDFQAMWYSDQNHGLSGLSTNHLYTHMTHFLKQCFSLSD.

At 1–4 (MKTW) the chain is on the cytoplasmic side. The chain crosses the membrane as a helical; Signal-anchor for type II membrane protein span at residues 5–25 (VKIVFGVATSAVLALLVMCIV). Over 26-760 (LRPSRVHNSE…FLKQCFSLSD (735 aa)) the chain is Extracellular. 3 N-linked (GlcNAc...) asparagine glycosylation sites follow: Asn49, Asn92, and Asn99. Positions 203 and 204 each coordinate substrate. N-linked (GlcNAc...) asparagine glycans are attached at residues Asn227 and Asn314. 3 disulfide bridges follow: Cys321/Cys332, Cys438/Cys441, and Cys448/Cys466. The Charge relay system role is filled by Ser624. Cys643 and Cys755 are disulfide-bonded. N-linked (GlcNAc...) asparagine glycosylation occurs at Asn679. Active-site charge relay system residues include Asp702 and His734.

Belongs to the peptidase S9B family. As to quaternary structure, homodimer; homodimerization is required for activity of both plasma membrane and soluble forms. The monomer is inactive. Heterodimer with DPP4. Interacts with PLAUR; the interaction occurs at the cell surface of invadopodia membranes. Interacts with ITGB1. Interacts with ITGA3. Associates with integrin alpha-3/beta-1; the association occurs in a collagen-dependent manner at the cell surface of invadopodia membranes. Post-translationally, N-glycosylated. In terms of processing, the N-terminus may be blocked. In terms of tissue distribution, expressed in adipose tissue. Expressed in the dermal fibroblasts in the fetal skin. Expressed in the granulation tissue of healing wounds and on reactive stromal fibroblast in epithelial cancers. Expressed in activated fibroblast-like synoviocytes from inflamed synovial tissues. Expressed in activated hepatic stellate cells (HSC) and myofibroblasts from cirrhotic liver, but not detected in normal liver. Expressed in glioma cells (at protein level). Expressed in glioblastomas and glioma cells. Isoform 1 and isoform 2 are expressed in melanoma, carcinoma and fibroblast cell lines.

It localises to the cell surface. It is found in the cell membrane. The protein resides in the cell projection. Its subcellular location is the lamellipodium membrane. The protein localises to the invadopodium membrane. It localises to the ruffle membrane. It is found in the membrane. The protein resides in the secreted. Its subcellular location is the cytoplasm. It catalyses the reaction Hydrolysis of Pro-|-Xaa &gt;&gt; Ala-|-Xaa in oligopeptides.. It carries out the reaction Release of an N-terminal dipeptide, Xaa-Yaa-|-Zaa-, from a polypeptide, preferentially when Yaa is Pro, provided Zaa is neither Pro nor hydroxyproline.. Its activity is regulated as follows. Gelatinase activity is inhibited by serine-protease inhibitors, such as phenylmethylsulfonyl fluoride (PMSF), 4-(2-aminoethyl)-benzenesulfonyl fluoride hydrochloride (AEBSF), 4-amidino phenylsulfonyl fluoride (APSF) and diisopropyl fluorophosphate (DFP), N-ethylmaleimide (NEM) and phenylmethylsulfonyl fluoride (PMSF). Dipeptidyl peptidase activity is inhibited by 2,2'-azino-bis(3-ethylbenzthiazoline-6-sulfonic acid), diisopropylfluorophosphate (DFP). Prolyl endopeptidase activity is inhibited by the boronic acid peptide Ac-Gly-BoroPro, Ac-Gly-Pro-chloromethyl ketone and Thr-Ser-Gly-chloromethyl ketone. Functionally, cell surface glycoprotein serine protease that participates in extracellular matrix degradation and involved in many cellular processes including tissue remodeling, fibrosis, wound healing, inflammation and tumor growth. Both plasma membrane and soluble forms exhibit post-proline cleaving endopeptidase activity, with a marked preference for Ala/Ser-Gly-Pro-Ser/Asn/Ala consensus sequences, on substrate such as alpha-2-antiplasmin SERPINF2 and SPRY2. Degrade also gelatin, heat-denatured type I collagen, but not native collagen type I and IV, vitronectin, tenascin, laminin, fibronectin, fibrin or casein. Also has dipeptidyl peptidase activity, exhibiting the ability to hydrolyze the prolyl bond two residues from the N-terminus of synthetic dipeptide substrates provided that the penultimate residue is proline, with a preference for Ala-Pro, Ile-Pro, Gly-Pro, Arg-Pro and Pro-Pro. Natural neuropeptide hormones for dipeptidyl peptidase are the neuropeptide Y (NPY), peptide YY (PYY), substance P (TAC1) and brain natriuretic peptide 32 (NPPB). The plasma membrane form, in association with either DPP4, PLAUR or integrins, is involved in the pericellular proteolysis of the extracellular matrix (ECM), and hence promotes cell adhesion, migration and invasion through the ECM. Plays a role in tissue remodeling during development and wound healing. Participates in the cell invasiveness towards the ECM in malignant melanoma cancers. Enhances tumor growth progression by increasing angiogenesis, collagen fiber degradation and apoptosis and by reducing antitumor response of the immune system. Promotes glioma cell invasion through the brain parenchyma by degrading the proteoglycan brevican. Acts as a tumor suppressor in melanocytic cells through regulation of cell proliferation and survival in a serine protease activity-independent manner. This chain is Prolyl endopeptidase FAP, found in Homo sapiens (Human).